The chain runs to 512 residues: ATP synthase subunit alpha (512 aa).

169–176 (GDRQTGKT) is a binding site for ATP.

Belongs to the ATPase alpha/beta chains family. In terms of assembly, F-type ATPases have 2 components, CF(1) - the catalytic core - and CF(0) - the membrane proton channel. CF(1) has five subunits: alpha(3), beta(3), gamma(1), delta(1), epsilon(1). CF(0) has four main subunits: a(1), b(1), b'(1) and c(9-12).

Its subcellular location is the cell inner membrane. It catalyses the reaction ATP + H2O + 4 H(+)(in) = ADP + phosphate + 5 H(+)(out). Its function is as follows. Produces ATP from ADP in the presence of a proton gradient across the membrane. The alpha chain is a regulatory subunit. This chain is ATP synthase subunit alpha, found in Roseobacter denitrificans (strain ATCC 33942 / OCh 114) (Erythrobacter sp. (strain OCh 114)).